The primary structure comprises 71 residues: Long neurotoxin Tx-NM3-1 (71 aa).

Cystine bridges form between Cys-3/Cys-20, Cys-14/Cys-41, Cys-26/Cys-30, Cys-45/Cys-56, and Cys-57/Cys-62.

In terms of tissue distribution, expressed by the venom gland.

It localises to the secreted. Functionally, binds with high affinity to muscular (alpha-1-beta-1-gamma-delta/CHRNA1-CHRNB1-CHRNG-CHRND) and neuronal (alpha-7/CHRNA7) nicotinic acetylcholine receptor (nAChR) and inhibits acetylcholine from binding to the receptor, thereby impairing neuromuscular and neuronal transmission. Ranges of nAChR inhibition are in nanomolar (competitive binding with alpha-bungarotoxin gives Ki=1.66 nM on muscle nAChR and Ki=4.84 nM on alpha-7). Also shows moderate inhibition on GABA(A) alpha-1-beta-3-gamma-2 receptor (GABRA1-GABRB3-GABRG2) (IC(50)=0.68 uM), and a lower inhibition on alpha-1-beta-2-gamma-2 (GABRA1-GABRB2-GABRG2) and alpha-3-beta-2-gamma-2 (GABRA3-GABRB2-GABRG2). The polypeptide is Long neurotoxin Tx-NM3-1 (Naja melanoleuca (Forest cobra)).